Reading from the N-terminus, the 334-residue chain is Delta(1)-pyrroline-2-carboxylate/Delta(1)-piperideine-2-carboxylate reductase (334 aa).

The active-site Charge relay system is S44. The active-site Proton donor is H45. Residue R49 participates in substrate binding. 117–121 (HFSAL) serves as a coordination point for NADP(+). Residue T157 coordinates substrate. 175 to 177 (DFA) is an NADP(+) binding site. 183-184 (RG) contributes to the substrate binding site. The Charge relay system role is filled by E185. Residues 226-227 (HK) and 301-307 (RLPSQRR) contribute to the NADP(+) site.

Belongs to the LDH2/MDH2 oxidoreductase family. Homodimer.

The enzyme catalyses L-pipecolate + NADP(+) = Delta(1)-piperideine-2-carboxylate + NADPH + H(+). It carries out the reaction L-proline + NADP(+) = 1-pyrroline-2-carboxylate + NADPH + H(+). It catalyses the reaction cis-4-hydroxy-L-proline + NADP(+) = Delta(1)-pyrroline-(4S)-hydroxy-2-carboxylate + NADPH + 2 H(+). Functionally, catalyzes the reduction of both Delta(1)-pyrroline-2-carboxylate (Pyr2C) and Delta(1)-piperideine-2-carboxylate (Pip2C) to L-proline and L-pipecolate, respectively, using NADPH as the electron donor. Cannot use NADH instead of NADPH. Is likely involved in a degradation pathway that converts trans-3-hydroxy-L-proline (t3LHyp) to L-proline, which would allow P.aeruginosa to grow on t3LHyp as a sole carbon source. Can also catalyze the reverse oxidation reactions, albeit at a much lower rate. Is also able to use Delta(1)-pyrroline-(4S)-hydroxy-2-carboxylate (Pyr4SH2C) and cis-4-hydroxy-L-proline (c4LHyp) as substrates, and might be involved in the metabolism of c4LHyp, a compound which is generated by the hydroxylation of free L-proline in bacteria. The polypeptide is Delta(1)-pyrroline-2-carboxylate/Delta(1)-piperideine-2-carboxylate reductase (Pseudomonas aeruginosa (strain ATCC 15692 / DSM 22644 / CIP 104116 / JCM 14847 / LMG 12228 / 1C / PRS 101 / PAO1)).